The sequence spans 141 residues: Small ribosomal subunit protein eS17w (141 aa).

Belongs to the eukaryotic ribosomal protein eS17 family.

This Arabidopsis thaliana (Mouse-ear cress) protein is Small ribosomal subunit protein eS17w (RPS17D).